Here is a 299-residue protein sequence, read N- to C-terminus: Biotin transporter (299 aa).

The next 10 helical transmembrane spans lie at 2-22, 26-46, 56-76, 81-101, 110-130, 137-157, 172-192, 202-222, 233-253, and 256-276; these read ALLIITTILWAFSFSLFGEYL, VDSYFAVLIRVGLAALVFLPF, TISLYMLVGAMQLGIMYMLSF, YLTVSELLLFTVLTPLYITLI, LRWGYAFSALLAVIGAGIIRY, FWVGLLLVQLSNISFAIGMVG, AFAWFYLGAFLVAAVAWSLLG, LQWSILVFLGVVASGIGYFMW, TLGIMNNMHVPAGLLVNLAIW, and QPHWPSFITGAAVILASLWVH. EamA domains are found at residues 3-128 and 139-274; these read LLII…AGII and VGLL…ASLW.

It belongs to the drug/metabolite transporter (DMT) superfamily. 10 TMS drug/metabolite exporter (DME) (TC 2.A.7.3) family.

It is found in the cell inner membrane. The enzyme catalyses biotin(in) = biotin(out). Its function is as follows. Uptake of biotin. The sequence is that of Biotin transporter from Salmonella typhi.